Reading from the N-terminus, the 206-residue chain is Octanoyltransferase (206 aa).

Residues 30–206 form the BPL/LPL catalytic domain; that stretch reads PETNDEIWLV…EFVTLLNNSI (177 aa). Residues 69–76, 137–139, and 150–152 each bind substrate; these read RGGQVTYH, SLG, and GIA. Cys-168 serves as the catalytic Acyl-thioester intermediate.

It belongs to the LipB family.

It localises to the cytoplasm. The catalysed reaction is octanoyl-[ACP] + L-lysyl-[protein] = N(6)-octanoyl-L-lysyl-[protein] + holo-[ACP] + H(+). It functions in the pathway protein modification; protein lipoylation via endogenous pathway; protein N(6)-(lipoyl)lysine from octanoyl-[acyl-carrier-protein]: step 1/2. Its function is as follows. Catalyzes the transfer of endogenously produced octanoic acid from octanoyl-acyl-carrier-protein onto the lipoyl domains of lipoate-dependent enzymes. Lipoyl-ACP can also act as a substrate although octanoyl-ACP is likely to be the physiological substrate. In Francisella tularensis subsp. holarctica (strain FTNF002-00 / FTA), this protein is Octanoyltransferase.